A 301-amino-acid polypeptide reads, in one-letter code: Acetyl-coenzyme A carboxylase carboxyl transferase subunit beta (301 aa).

Positions 25–294 (LWIKCPETGE…SAANDVTRGA (270 aa)) constitute a CoA carboxyltransferase N-terminal domain.

Belongs to the AccD/PCCB family. Acetyl-CoA carboxylase is a heterohexamer composed of biotin carboxyl carrier protein (AccB), biotin carboxylase (AccC) and two subunits each of ACCase subunit alpha (AccA) and ACCase subunit beta (AccD).

It localises to the cytoplasm. The enzyme catalyses N(6)-carboxybiotinyl-L-lysyl-[protein] + acetyl-CoA = N(6)-biotinyl-L-lysyl-[protein] + malonyl-CoA. It functions in the pathway lipid metabolism; malonyl-CoA biosynthesis; malonyl-CoA from acetyl-CoA: step 1/1. Component of the acetyl coenzyme A carboxylase (ACC) complex. Biotin carboxylase (BC) catalyzes the carboxylation of biotin on its carrier protein (BCCP) and then the CO(2) group is transferred by the transcarboxylase to acetyl-CoA to form malonyl-CoA. The chain is Acetyl-coenzyme A carboxylase carboxyl transferase subunit beta from Rhizobium etli (strain ATCC 51251 / DSM 11541 / JCM 21823 / NBRC 15573 / CFN 42).